Here is a 374-residue protein sequence, read N- to C-terminus: Patatin-2-Kuras 4 (374 aa).

The N-terminal stretch at 1-11 is a signal peptide; that stretch reads MILATTSSTCA. The PNPLA domain maps to 20 to 217; the sequence is LSIDGGGIKG…TVGDPALLSL (198 aa). Positions 24 to 29 match the GXGXXG motif; sequence GGGIKG. The GXSXG motif lies at 63 to 67; it reads GTSTG. Catalysis depends on serine 65, which acts as the Nucleophile. The N-linked (GlcNAc...) asparagine glycan is linked to asparagine 103. Aspartate 203 (proton acceptor) is an active-site residue. Residues 203 to 205 carry the DGA/G motif; that stretch reads DGG. Residues 309 to 372 are a coiled coil; sequence ENALTGTTTE…DRKKLRANKA (64 aa).

Belongs to the patatin family.

The protein localises to the vacuole. Its function is as follows. Probable lipolytic acyl hydrolase (LAH), an activity which is thought to be involved in the response of tubers to pathogens. The protein is Patatin-2-Kuras 4 (pat2-k4) of Solanum tuberosum (Potato).